Consider the following 477-residue polypeptide: Glycogen synthase (477 aa).

An ADP-alpha-D-glucose-binding site is contributed by Lys15.

It belongs to the glycosyltransferase 1 family. Bacterial/plant glycogen synthase subfamily.

It carries out the reaction [(1-&gt;4)-alpha-D-glucosyl](n) + ADP-alpha-D-glucose = [(1-&gt;4)-alpha-D-glucosyl](n+1) + ADP + H(+). It participates in glycan biosynthesis; glycogen biosynthesis. Functionally, synthesizes alpha-1,4-glucan chains using ADP-glucose. In Cronobacter sakazakii (strain ATCC BAA-894) (Enterobacter sakazakii), this protein is Glycogen synthase.